A 75-amino-acid polypeptide reads, in one-letter code: Cruzioseptin-7 (75 aa).

Positions 1-22 are cleaved as a signal peptide; sequence MAKLKKSLFLVLFLGLVSLSIC. A propeptide spanning residues 23-43 is cleaved from the precursor; it reads EEEKREEENEEVQEDDDQSEE. The interval 25-44 is disordered; that stretch reads EKREEENEEVQEDDDQSEEK. Positions 30-41 are enriched in acidic residues; it reads ENEEVQEDDDQS.

As to expression, expressed by the skin glands.

The protein resides in the secreted. Has antimicrobial activity. This Cruziohyla calcarifer (Splendid leaf frog) protein is Cruzioseptin-7.